The chain runs to 427 residues: Trigger factor (427 aa).

Positions 160 to 240 constitute a PPIase FKBP-type domain; sequence TDTVIGDVEK…VKEVKRLELP (81 aa).

This sequence belongs to the FKBP-type PPIase family. Tig subfamily.

Its subcellular location is the cytoplasm. The enzyme catalyses [protein]-peptidylproline (omega=180) = [protein]-peptidylproline (omega=0). Involved in protein export. Acts as a chaperone by maintaining the newly synthesized protein in an open conformation. Functions as a peptidyl-prolyl cis-trans isomerase. The sequence is that of Trigger factor from Chlorobium phaeobacteroides (strain DSM 266 / SMG 266 / 2430).